Reading from the N-terminus, the 391-residue chain is Autotransporter heptosyltransferase Aah (391 aa).

3 residues coordinate ADP-D-glycero-beta-D-manno-heptose: threonine 101, leucine 102, and glycine 103. Aspartate 104 serves as the catalytic Proton acceptor. ADP-D-glycero-beta-D-manno-heptose contacts are provided by glutamine 218, threonine 220, lysine 224, arginine 251, leucine 275, glycine 296, and glutamate 320. Fe(3+) is bound by residues cysteine 333, cysteine 336, cysteine 352, and cysteine 364.

This sequence belongs to the glycosyltransferase 9 family. In terms of assembly, homododecamer composed of 6 homodimers forming a ring. The cofactor is Fe(3+).

The protein localises to the cytoplasm. The catalysed reaction is ADP-D-glycero-beta-D-manno-heptose + L-seryl-[protein] = O-(D-glycero-alpha-D-manno-heptosyl)-L-seryl-[protein] + ADP + H(+). The enzyme catalyses ADP-L-glycero-beta-D-manno-heptose + L-seryl-[protein] = O-(L-glycero-alpha-D-manno-heptosyl)-L-seryl-[protein] + ADP + H(+). Functionally, glycosylates autotransporter AIDA-I. Catalyzes the addition of both L, D-heptose and D, D-heptose sugars. Probably by glycosylating AIDA-I, involved in bacteria adhesion to host mammalian cells. This Escherichia coli protein is Autotransporter heptosyltransferase Aah.